The chain runs to 1318 residues: DNA-directed RNA polymerase subunit beta' (1318 aa).

Zn(2+) contacts are provided by cysteine 60, cysteine 62, cysteine 75, and cysteine 78. The Mg(2+) site is built by aspartate 535, aspartate 537, and aspartate 539. Zn(2+) is bound by residues cysteine 890, cysteine 967, cysteine 974, and cysteine 977.

Belongs to the RNA polymerase beta' chain family. The RNAP catalytic core consists of 2 alpha, 1 beta, 1 beta' and 1 omega subunit. When a sigma factor is associated with the core the holoenzyme is formed, which can initiate transcription. The cofactor is Mg(2+). Zn(2+) serves as cofactor.

It carries out the reaction RNA(n) + a ribonucleoside 5'-triphosphate = RNA(n+1) + diphosphate. In terms of biological role, DNA-dependent RNA polymerase catalyzes the transcription of DNA into RNA using the four ribonucleoside triphosphates as substrates. In Rhodococcus jostii (strain RHA1), this protein is DNA-directed RNA polymerase subunit beta'.